We begin with the raw amino-acid sequence, 493 residues long: 3-octaprenyl-4-hydroxybenzoate carboxy-lyase (493 aa).

Asparagine 172 is a Mn(2+) binding site. Residues 175–177 (IYR), 189–191 (RWL), and 194–195 (RG) contribute to the prenylated FMN site. Residue glutamate 238 coordinates Mn(2+). Aspartate 287 (proton donor) is an active-site residue.

The protein belongs to the UbiD family. Homohexamer. It depends on prenylated FMN as a cofactor. Mn(2+) is required as a cofactor.

The protein localises to the cell membrane. It carries out the reaction a 4-hydroxy-3-(all-trans-polyprenyl)benzoate + H(+) = a 2-(all-trans-polyprenyl)phenol + CO2. It participates in cofactor biosynthesis; ubiquinone biosynthesis. Its function is as follows. Catalyzes the decarboxylation of 3-octaprenyl-4-hydroxy benzoate to 2-octaprenylphenol, an intermediate step in ubiquinone biosynthesis. This is 3-octaprenyl-4-hydroxybenzoate carboxy-lyase from Shewanella putrefaciens (strain CN-32 / ATCC BAA-453).